We begin with the raw amino-acid sequence, 120 residues long: UPF0342 protein LAF_1331 (120 aa).

This sequence belongs to the UPF0342 family.

This Limosilactobacillus fermentum (strain NBRC 3956 / LMG 18251) (Lactobacillus fermentum) protein is UPF0342 protein LAF_1331.